The chain runs to 322 residues: Putative DNA-directed RNA polymerase subunit alpha-like 2 (322 aa).

The tract at residues 1 to 232 is alpha N-terminal domain (alpha-NTD); that stretch reads MSNPNNGAEW…GLLSLVFQAE (232 aa). The segment at 280-322 is alpha C-terminal domain (alpha-CTD); it reads EGPVTDEEGDSIDPTFTPVQKWDITMNSYQYSGETFQGLLSRF.

Belongs to the RNA polymerase alpha chain family. As to quaternary structure, in plastids the minimal PEP RNA polymerase catalytic core is composed of four subunits: alpha, beta, beta', and beta''. When a (nuclear-encoded) sigma factor is associated with the core the holoenzyme is formed, which can initiate transcription.

The protein resides in the plastid. Its subcellular location is the chloroplast. It carries out the reaction RNA(n) + a ribonucleoside 5'-triphosphate = RNA(n+1) + diphosphate. In terms of biological role, DNA-dependent RNA polymerase catalyzes the transcription of DNA into RNA using the four ribonucleoside triphosphates as substrates. This chain is Putative DNA-directed RNA polymerase subunit alpha-like 2 (rpoAL2-A), found in Pelargonium hortorum (Common geranium).